We begin with the raw amino-acid sequence, 148 residues long: Small ribosomal subunit protein bS16 (148 aa).

Low complexity predominate over residues 111-122; that stretch reads AAAGEEPVAEAT. The tract at residues 111-148 is disordered; the sequence is AAAGEEPVAEATTPKKKGGKKAEAEDKAEEQKSEEGQA. Positions 130–148 are enriched in basic and acidic residues; sequence KKAEAEDKAEEQKSEEGQA.

It belongs to the bacterial ribosomal protein bS16 family.

This is Small ribosomal subunit protein bS16 from Saccharopolyspora erythraea (strain ATCC 11635 / DSM 40517 / JCM 4748 / NBRC 13426 / NCIMB 8594 / NRRL 2338).